A 137-amino-acid chain; its full sequence is Peptidyl-tRNA hydrolase ArfB (137 aa).

The tract at residues 102–137 (EKKRRPTKPTLGSKTRRLEGKARRSTVKAGRGKVDF) is disordered.

It belongs to the prokaryotic/mitochondrial release factor family. As to quaternary structure, associated with 70S ribosomes and polysomes.

It localises to the cytoplasm. It carries out the reaction an N-acyl-L-alpha-aminoacyl-tRNA + H2O = an N-acyl-L-amino acid + a tRNA + H(+). Its function is as follows. Rescues stalled ribosomes. Can hydrolyze peptidyl-tRNA on ribosomes stalled by both non-stop mRNAs and mRNAs that contain rare codon clusters. In Pseudomonas putida (Arthrobacter siderocapsulatus), this protein is Peptidyl-tRNA hydrolase ArfB (arfB).